The primary structure comprises 498 residues: ATP synthase subunit beta, chloroplastic (498 aa).

172–179 (GGAGVGKT) is an ATP binding site.

It belongs to the ATPase alpha/beta chains family. In terms of assembly, F-type ATPases have 2 components, CF(1) - the catalytic core - and CF(0) - the membrane proton channel. CF(1) has five subunits: alpha(3), beta(3), gamma(1), delta(1), epsilon(1). CF(0) has four main subunits: a(1), b(1), b'(1) and c(9-12).

It is found in the plastid. The protein resides in the chloroplast thylakoid membrane. The enzyme catalyses ATP + H2O + 4 H(+)(in) = ADP + phosphate + 5 H(+)(out). Its function is as follows. Produces ATP from ADP in the presence of a proton gradient across the membrane. The catalytic sites are hosted primarily by the beta subunits. The polypeptide is ATP synthase subunit beta, chloroplastic (Agrostis stolonifera (Creeping bentgrass)).